The following is a 1185-amino-acid chain: DNA-directed RNA polymerase subunit beta' (1185 aa).

Zn(2+) contacts are provided by cysteine 60, cysteine 62, cysteine 75, and cysteine 78. 3 residues coordinate Mg(2+): aspartate 449, aspartate 451, and aspartate 453. Zn(2+) contacts are provided by cysteine 774, cysteine 853, cysteine 860, and cysteine 863.

It belongs to the RNA polymerase beta' chain family. As to quaternary structure, the RNAP catalytic core consists of 2 alpha, 1 beta, 1 beta' and 1 omega subunit. When a sigma factor is associated with the core the holoenzyme is formed, which can initiate transcription. Mg(2+) serves as cofactor. It depends on Zn(2+) as a cofactor.

The enzyme catalyses RNA(n) + a ribonucleoside 5'-triphosphate = RNA(n+1) + diphosphate. Its function is as follows. DNA-dependent RNA polymerase catalyzes the transcription of DNA into RNA using the four ribonucleoside triphosphates as substrates. This Desulforamulus reducens (strain ATCC BAA-1160 / DSM 100696 / MI-1) (Desulfotomaculum reducens) protein is DNA-directed RNA polymerase subunit beta'.